The following is a 61-amino-acid chain: Small ribosomal subunit protein uS14B (61 aa).

Zn(2+) is bound by residues cysteine 24, cysteine 27, cysteine 40, and cysteine 43.

The protein belongs to the universal ribosomal protein uS14 family. Zinc-binding uS14 subfamily. Part of the 30S ribosomal subunit. Contacts proteins S3 and S10. Zn(2+) is required as a cofactor.

Binds 16S rRNA, required for the assembly of 30S particles and may also be responsible for determining the conformation of the 16S rRNA at the A site. This chain is Small ribosomal subunit protein uS14B, found in Shouchella clausii (strain KSM-K16) (Alkalihalobacillus clausii).